The primary structure comprises 408 residues: G patch domain-containing protein 4 (408 aa).

Position 1 is an N-acetylmethionine (methionine 1). Threonine 4 bears the Phosphothreonine mark. The G-patch domain maps to 11–57; the sequence is GMKFAEEQLLKHGWTQGKGLGRKENGITQALRVTLKQDTYGVGHDPA. A Glycyl lysine isopeptide (Lys-Gly) (interchain with G-Cter in SUMO2) cross-link involves residue lysine 46. A Phosphothreonine modification is found at threonine 116. Disordered stretches follow at residues 116–141 and 187–408; these read TSSG…KPPN and GQDP…KKRD. 2 positions are modified to phosphoserine: serine 128 and serine 130. 3 stretches are compositionally biased toward basic and acidic residues: residues 222 to 236, 245 to 257, and 274 to 283; these read RSAE…ESIR, HQEE…REGT, and LKNREHVDRS. Residues 340–354 show a composition bias toward acidic residues; the sequence is EEDLNTEDEEVEEAL. A compositionally biased stretch (basic and acidic residues) spans 358-372; that stretch reads GTREAESRSCSDQKR. The span at 398-408 shows a compositional bias: basic residues; the sequence is KAKKKKQKKRD.

The chain is G patch domain-containing protein 4 (GPATCH4) from Bos taurus (Bovine).